The following is a 1350-amino-acid chain: Ubiquitin carboxyl-terminal hydrolase 47 (1350 aa).

The tract at residues 111–138 (DGEQPQLTSDESGTADSSGLDDSSQEKF) is disordered. A compositionally biased stretch (polar residues) spans 115–132 (PQLTSDESGTADSSGLDD). Positions 173–548 (VGLVNQAMTC…NAYMLMYRLK (376 aa)) constitute a USP domain. Catalysis depends on Cys182, which acts as the Nucleophile. A disordered region spans residues 409-437 (EDEKSPQTDSCTDSGAENEGSCHSDQMSN). Residues 415 to 437 (QTDSCTDSGAENEGSCHSDQMSN) show a composition bias toward polar residues. His487 functions as the Proton acceptor in the catalytic mechanism. 2 disordered regions span residues 815–836 (HPRP…PQED) and 859–1000 (SLQQ…ESGK). Positions 859-877 (SLQQHQDGGNGDSSKSTEG) are enriched in polar residues. Residues 916-926 (PEERSDSDVNN) are compositionally biased toward basic and acidic residues. The segment covering 929–945 (STSSVDSDILSSSHSSD) has biased composition (low complexity). The span at 973–982 (KANDGKKETW) shows a compositional bias: basic and acidic residues. Residues 983-996 (DTAEEDSGTDSEYD) are compositionally biased toward acidic residues.

This sequence belongs to the peptidase C19 family. USP47 subfamily.

The protein resides in the cytoplasm. The enzyme catalyses Thiol-dependent hydrolysis of ester, thioester, amide, peptide and isopeptide bonds formed by the C-terminal Gly of ubiquitin (a 76-residue protein attached to proteins as an intracellular targeting signal).. Functionally, ubiquitin-specific protease that specifically deubiquitinates monoubiquitinated DNA polymerase beta (polb), stabilizing polb thereby playing a role in base-excision repair (BER). The polypeptide is Ubiquitin carboxyl-terminal hydrolase 47 (usp47) (Xenopus laevis (African clawed frog)).